The following is a 220-amino-acid chain: NADH-quinone oxidoreductase subunit I (220 aa).

2 4Fe-4S ferredoxin-type domains span residues 71–102 (LQRL…IITH) and 112–141 (DSYT…MGNR). Residues Cys82, Cys85, Cys88, Cys92, Cys121, Cys124, Cys127, and Cys131 each coordinate [4Fe-4S] cluster. The tract at residues 189–220 (ATPLDYVQEPSKEESKKETPTSPEANKGDENV) is disordered. Over residues 198–207 (PSKEESKKET) the composition is skewed to basic and acidic residues.

This sequence belongs to the complex I 23 kDa subunit family. In terms of assembly, NDH-1 is composed of 14 different subunits. Subunits NuoA, H, J, K, L, M, N constitute the membrane sector of the complex. [4Fe-4S] cluster serves as cofactor.

It is found in the cell inner membrane. The catalysed reaction is a quinone + NADH + 5 H(+)(in) = a quinol + NAD(+) + 4 H(+)(out). In terms of biological role, NDH-1 shuttles electrons from NADH, via FMN and iron-sulfur (Fe-S) centers, to quinones in the respiratory chain. The immediate electron acceptor for the enzyme in this species is believed to be ubiquinone. Couples the redox reaction to proton translocation (for every two electrons transferred, four hydrogen ions are translocated across the cytoplasmic membrane), and thus conserves the redox energy in a proton gradient. The protein is NADH-quinone oxidoreductase subunit I of Helicobacter acinonychis (strain Sheeba).